Consider the following 416-residue polypeptide: D-amino acid dehydrogenase (416 aa).

An FAD-binding site is contributed by 3 to 17 (ITILGSGVIGVTTAY).

The protein belongs to the DadA oxidoreductase family. FAD serves as cofactor.

The enzyme catalyses a D-alpha-amino acid + A + H2O = a 2-oxocarboxylate + AH2 + NH4(+). Its pathway is amino-acid degradation; D-alanine degradation; NH(3) and pyruvate from D-alanine: step 1/1. In terms of biological role, oxidative deamination of D-amino acids. The chain is D-amino acid dehydrogenase from Brucella anthropi (strain ATCC 49188 / DSM 6882 / CCUG 24695 / JCM 21032 / LMG 3331 / NBRC 15819 / NCTC 12168 / Alc 37) (Ochrobactrum anthropi).